The chain runs to 178 residues: Disulfide bond formation protein B (178 aa).

Residues 1–16 (MTIFSSLNQFSKGHVS) are Cytoplasmic-facing. The chain crosses the membrane as a helical span at residues 17 to 33 (WLLLLLFIIFFEACALY). Residues 34-51 (FQHVMMLAPCVMCIYERV) are Periplasmic-facing. The cysteines at positions 43 and 46 are disulfide-linked. Residues 52–67 (AMMGIGGAAIIGLIAP) traverse the membrane as a helical segment. The Cytoplasmic portion of the chain corresponds to 68 to 74 (NNALFRW). A helical transmembrane segment spans residues 75 to 92 (LGLIGWGLSSYKGLMLAM). At 93–147 (QHVDYQFNPSPFATCDLFVTFPSWAPLNQWVPWMFEAYGDCSKIVWQFFDLSMPQ) the chain is on the periplasmic side. Residues Cys107 and Cys133 are joined by a disulfide bond. Residues 148–166 (WLVVIFAGNLVALALIVIA) form a helical membrane-spanning segment. Over 167–178 (QFFPVKRKNPIR) the chain is Cytoplasmic.

The protein belongs to the DsbB family.

It is found in the cell inner membrane. In terms of biological role, required for disulfide bond formation in some periplasmic proteins. Acts by oxidizing the DsbA protein. In Vibrio parahaemolyticus serotype O3:K6 (strain RIMD 2210633), this protein is Disulfide bond formation protein B.